Consider the following 465-residue polypeptide: Transcriptional protein swt1 (465 aa).

The PINc domain occupies 70–190 (GLFVLDTNFL…LLSDDKNLSI (121 aa)).

This sequence belongs to the SWT1 family.

Its subcellular location is the cytoplasm. It localises to the nucleus. Involved in transcription. The protein is Transcriptional protein swt1 of Schizosaccharomyces pombe (strain 972 / ATCC 24843) (Fission yeast).